Reading from the N-terminus, the 561-residue chain is Putative transport protein YbjL (561 aa).

The next 5 helical transmembrane spans lie at 8-28 (LLNG…LCLG), 32-52 (LGSI…LLGQ), 66-86 (FMLF…SIFF), 94-114 (MLAL…GKLF), and 158-178 (NLSL…IVGA). RCK C-terminal domains lie at 200-288 (RGLD…SFRN) and 292-373 (VFDR…RIGF). 5 helical membrane-spanning segments follow: residues 383–403 (LLAF…TFQF), 406–426 (FSFG…LGFM), 451–471 (VFMA…LGAI), 475–495 (MLIA…LFGA), and 540–560 (AIAN…WPGL).

It belongs to the AAE transporter (TC 2.A.81) family. YbjL subfamily.

It localises to the cell membrane. In Shigella flexneri, this protein is Putative transport protein YbjL.